Here is a 129-residue protein sequence, read N- to C-terminus: UPF0102 protein Mrad2831_2938 (129 aa).

Belongs to the UPF0102 family.

The chain is UPF0102 protein Mrad2831_2938 from Methylobacterium radiotolerans (strain ATCC 27329 / DSM 1819 / JCM 2831 / NBRC 15690 / NCIMB 10815 / 0-1).